Reading from the N-terminus, the 58-residue chain is SPbeta prophage-derived uncharacterized protein YonT (58 aa).

Residues 6-26 (GIVVAFLISLTVLTINSLTIV) traverse the membrane as a helical segment. Residues 35–58 (GTSKKKKRIRKRLRPKRQRQRIRR) are disordered. Residues 36–58 (TSKKKKRIRKRLRPKRQRQRIRR) show a composition bias toward basic residues.

Its subcellular location is the cell membrane. In Bacillus subtilis (strain 168), this protein is SPbeta prophage-derived uncharacterized protein YonT (yonT).